Reading from the N-terminus, the 316-residue chain is Porphobilinogen deaminase (316 aa).

Cys-245 is subject to S-(dipyrrolylmethanemethyl)cysteine.

It belongs to the HMBS family. As to quaternary structure, monomer. The cofactor is dipyrromethane.

It catalyses the reaction 4 porphobilinogen + H2O = hydroxymethylbilane + 4 NH4(+). Its pathway is porphyrin-containing compound metabolism; protoporphyrin-IX biosynthesis; coproporphyrinogen-III from 5-aminolevulinate: step 2/4. It functions in the pathway porphyrin-containing compound metabolism; chlorophyll biosynthesis. Its function is as follows. Tetrapolymerization of the monopyrrole PBG into the hydroxymethylbilane pre-uroporphyrinogen in several discrete steps. This is Porphobilinogen deaminase from Prochlorococcus marinus (strain AS9601).